A 538-amino-acid chain; its full sequence is MTPAREIGAFNILVFLIFLWLLSKLVGRLGRRGRTTPLRGPANKSLLFGLTRYINVEADDSGAVYESWAAEYGPAFRVPGVLGSHRIVICDAKAIAHFYSKETFGYVQSPRARSTIKNIVGRGLLWSEGESHRRQRKALSPAFSNAAIRRLTSVFFDSSYKMKAAWDSILETNPDNTVIDVQKWMNHISLDSIGIAGFSHDFGSLDGKHSDVAAVFDSFGSINPSYFSMVIFLLALVFPILLKLPTNRNLLVLKLRERTSEIADVLLERTRKEKEGRTGTVEEKSIIGLLIKAESAETELHMSQEEIVAQMNVLLLAGYETTSSKTFLTWALIELSKNPEKQAKLREELLSQYTTTDPTWEQLANGLPYLDSVVHEILRLHPPVGETFRVAAEDDIIPLSRPLVTLSGQTVSSIAIGKGTMVGVPIRCMNRSEVLWGKDAKEFRPERWLEPGFGENNEVQGHRHLLTFIDGPRTCLGRGFALAEFKAVLSVLIRKYAFEFPGPGGAVPKIEKHRSILPRPKVEGQDGAKVPLRVRRVE.

Helical transmembrane passes span 7 to 27 and 222 to 242; these read IGAFNILVFLIFLWLLSKLVG and INPSYFSMVIFLLALVFPILL. A heme-binding site is contributed by cysteine 475.

Belongs to the cytochrome P450 family. Heme is required as a cofactor.

The protein localises to the membrane. It participates in secondary metabolite biosynthesis; terpenoid biosynthesis. In terms of biological role, cytochrome P450 monooxygenase; part of the gene cluster that mediates the biosynthesis of clavilactone A, a meroterpenoid that features a unique benzo-fused ten-membered carbocyclic ring unit with an alpha,beta-epoxy-gamma-lactone moiety, forming an intriguing 10/5/3 tricyclic nested skeleton. Cytochrome P450 monooxygenases claO, claP, claQ, claU, and claW are close orthologs, suggesting that a redundant function or pseudogenes are present in the cla cluster. These monoxygenases are not involved in clavilactone A biosynthesis nor in its modification. ClaR, ClaS and ClaT are sufficient to produce clavilactone A. The biosynthesis begins with the prenyltransferase claS that transfers geranyl pyrophosphate (GPP) to hydroquinone to produces geranylhydroquinone. The cytochrome P450 monooxygenase claR then catalyzes the diradical coupling reaction between the intramolecular hydroquinone and allyl moieties to form the benzo-fused ten-membered carbocyclic ring unit of wigantol. Finally the cytochrome P450 monooxygenase claT exquisitely and stereoselectively assembles the alpha,beta-epoxy-gamma-lactone moiety, producing clavilactone A via arnebinol A. This is Cytochrome P450 monooxygenase claO from Ampulloclitocybe clavipes (Club foot).